Consider the following 1181-residue polypeptide: Cellulose synthase-like protein D5 (1181 aa).

The span at 1-17 shows a compositional bias: polar residues; sequence MVKSAASQSPSPVTITV. 2 disordered regions span residues 1-70 and 202-229; these read MVKS…DEGR and KEPY…LPQM. A compositionally biased stretch (low complexity) spans 48–59; the sequence is SSRATRRTSISS. Residues 210–222 are compositionally biased toward acidic residues; the sequence is DDPETEEEDEEDE. 2 helical membrane passes run 312 to 332 and 343 to 363; these read AIIS…GLFL and AMWL…SWLL. D443 is a catalytic residue. Residues 497-542 are a coiled coil; that stretch reads VRERRRVKREYDEFKVRINSLPEAIRRRSDAYNVHEELRAKKKQME. Residue D884 is part of the active site. 6 consecutive transmembrane segments (helical) span residues 966-986, 991-1011, 1038-1058, 1082-1102, 1116-1136, and 1146-1166; these read LFLI…QFIV, ITFL…SLLE, PAAV…SFTL, FLMV…AVGL, LVGG…FAKG, and TIVF…WVYI.

The protein belongs to the glycosyltransferase 2 family. Plant cellulose synthase-like D subfamily. As to expression, expressed in vascular tissues.

The protein localises to the golgi apparatus membrane. Involved in stem and root growth. Possesses xylan and homogalacturonan synthase activity. In Arabidopsis thaliana (Mouse-ear cress), this protein is Cellulose synthase-like protein D5 (CSLD5).